The following is a 128-amino-acid chain: Ribosome-binding factor A (128 aa).

This sequence belongs to the RbfA family. In terms of assembly, monomer. Binds 30S ribosomal subunits, but not 50S ribosomal subunits or 70S ribosomes.

Its subcellular location is the cytoplasm. In terms of biological role, one of several proteins that assist in the late maturation steps of the functional core of the 30S ribosomal subunit. Associates with free 30S ribosomal subunits (but not with 30S subunits that are part of 70S ribosomes or polysomes). Required for efficient processing of 16S rRNA. May interact with the 5'-terminal helix region of 16S rRNA. The protein is Ribosome-binding factor A of Haemophilus influenzae (strain ATCC 51907 / DSM 11121 / KW20 / Rd).